The sequence spans 365 residues: Caffeic acid 3-O-methyltransferase (365 aa).

Asn133 is a (E)-ferulate binding site. S-adenosyl-L-homocysteine-binding residues include Gly210, Asp233, Asp253, Met254, Met266, and Lys267. His271 serves as the catalytic Proton acceptor. Asp272 contributes to the (E)-5-hydroxyferulate binding site.

It belongs to the class I-like SAM-binding methyltransferase superfamily. Cation-independent O-methyltransferase family. COMT subfamily. In terms of assembly, homodimer.

The enzyme catalyses (E)-caffeate + S-adenosyl-L-methionine = (E)-ferulate + S-adenosyl-L-homocysteine + H(+). It catalyses the reaction (E)-5-hydroxyferulate + S-adenosyl-L-methionine = (E)-sinapate + S-adenosyl-L-homocysteine + H(+). Its pathway is aromatic compound metabolism; phenylpropanoid biosynthesis. With respect to regulation, inhibited by Cu(2+), and to a lesser extent by Ni(2+), Mn(2+), Co(2+), Fe(3+) and Zn(2+). Unaffected by Fe(2+) and Mg(2+). Catalyzes the conversion of caffeic acid to ferulic acid and of 5-hydroxyferulic acid to sinapic acid. The resulting products may subsequently be converted to the corresponding alcohols that are incorporated into lignins. The chain is Caffeic acid 3-O-methyltransferase from Ammi majus (Bishop's weed).